The primary structure comprises 194 residues: Thymidine kinase (194 aa).

Residues 15 to 22 (GSMFSGKS) and 88 to 91 (DEVQ) each bind ATP. Glutamate 89 functions as the Proton acceptor in the catalytic mechanism. Zn(2+)-binding residues include cysteine 145, cysteine 148, cysteine 183, and cysteine 186.

Belongs to the thymidine kinase family. As to quaternary structure, homotetramer.

Its subcellular location is the cytoplasm. It catalyses the reaction thymidine + ATP = dTMP + ADP + H(+). In Bacillus anthracis (strain A0248), this protein is Thymidine kinase.